A 121-amino-acid chain; its full sequence is Large ribosomal subunit protein uL18 (121 aa).

The protein belongs to the universal ribosomal protein uL18 family. In terms of assembly, part of the 50S ribosomal subunit; part of the 5S rRNA/L5/L18/L25 subcomplex. Contacts the 5S and 23S rRNAs.

Functionally, this is one of the proteins that bind and probably mediate the attachment of the 5S RNA into the large ribosomal subunit, where it forms part of the central protuberance. The protein is Large ribosomal subunit protein uL18 of Ureaplasma parvum serovar 3 (strain ATCC 27815 / 27 / NCTC 11736).